Here is a 298-residue protein sequence, read N- to C-terminus: 3-sulfolactaldehyde reductase (298 aa).

Residues 11 to 12 (QM), aspartate 31, leucine 65, and threonine 96 contribute to the NAD(+) site. Arginine 123 is a 2,3-dihydroxypropane-1-sulfonate binding site. The active site involves lysine 171. 174 to 178 (NNYMS) contributes to the 2,3-dihydroxypropane-1-sulfonate binding site. Lysine 240 lines the NAD(+) pocket.

This sequence belongs to the HIBADH-related family. 3-sulfolactaldehyde reductase subfamily. Homotetramer. Dimer of dimers.

The enzyme catalyses (2S)-3-sulfopropanediol + NAD(+) = (2S)-3-sulfolactaldehyde + NADH + H(+). It catalyses the reaction 4-hydroxybutanoate + NAD(+) = succinate semialdehyde + NADH + H(+). With respect to regulation, inhibited by the NADH analogs tetrahydro-NADH and hexahydro-NADH. Reduces 3-sulfolactaldehyde (SLA) to 2,3-dihydroxypropane 1-sulfonate (DHPS). Metabolite profiling studies showed that the enzyme also catalyzes in vitro the NADH-dependent reduction of succinic semialdehyde (SSA) to 4-hydroxybutyrate (GHB), and that it could be involved in the metabolism of SSA, and other potentially toxic intermediates that may accumulate under stress conditions. However, the enzyme exhibits a 42,000-fold greater catalytic efficiency for the reduction of SLA over SSA. Shows no detectable activity on the analogous glycolytic intermediate glyceraldehyde-3-phosphate. This is 3-sulfolactaldehyde reductase (yihU) from Escherichia coli (strain K12).